The primary structure comprises 556 residues: Membrane protein insertase YidC (556 aa).

The chain crosses the membrane as a helical span at residues 5-25 (TLTAIVLSFVLLTAFQFYMAW). The interval 36 to 74 (QVQSGESSAPAPLASTAPVADALPPPVEGMAGSAPQQAM) is disordered. The span at 42 to 55 (SSAPAPLASTAPVA) shows a compositional bias: low complexity. The next 4 membrane-spanning stretches (helical) occupy residues 370–390 (NYGV…FPLA), 441–461 (LPIL…FLSV), 468–488 (FMLW…PLLM), and 510–530 (IMMF…SGLV).

It belongs to the OXA1/ALB3/YidC family. Type 1 subfamily. As to quaternary structure, interacts with the Sec translocase complex via SecD. Specifically interacts with transmembrane segments of nascent integral membrane proteins during membrane integration.

The protein resides in the cell inner membrane. Its function is as follows. Required for the insertion and/or proper folding and/or complex formation of integral membrane proteins into the membrane. Involved in integration of membrane proteins that insert both dependently and independently of the Sec translocase complex, as well as at least some lipoproteins. Aids folding of multispanning membrane proteins. This chain is Membrane protein insertase YidC, found in Magnetococcus marinus (strain ATCC BAA-1437 / JCM 17883 / MC-1).